The chain runs to 260 residues: Pro-opiomelanocortin (260 aa).

The N-terminal stretch at 1 to 25 (MLQPVWSCILALLGVFIFHVGEVRS) is a signal peptide. Gln-26 bears the Pyrrolidone carboxylic acid mark. At Phe-86 the chain carries Phenylalanine amide. A glycan (N-linked (GlcNAc...) asparagine) is linked at Asn-90. Residues 104–138 (EDIANYPILNLLTGSDNQNTQQGIMEDEAVDRQDS) constitute a propeptide that is removed on maturation. Val-153 is subject to Valine amide.

This sequence belongs to the POMC family. Specific enzymatic cleavages at paired basic residues yield the different active peptides.

It localises to the secreted. Functionally, stimulates the adrenal glands to release cortisol. Its function is as follows. Anorexigenic peptide. Increases the pigmentation of skin by increasing melanin production in melanocytes. Increases the pigmentation of skin by increasing melanin production in melanocytes. In terms of biological role, endogenous orexigenic opiate. Functionally, endogenous opiate. This Pelophylax ridibundus (Marsh frog) protein is Pro-opiomelanocortin (pomc).